Consider the following 314-residue polypeptide: R2-like ligand binding oxidase (314 aa).

Mn(2+) is bound by residues Glu-68, Glu-101, and His-104. A cross-link (3-(O4'-tyrosyl)-valine (Val-Tyr)) is located at residues 71–162; it reads VTEDIQPFMS…AAQVRASVTY (92 aa). A Fe cation-binding site is contributed by Glu-101. The Fe cation site is built by Glu-167, Glu-202, and His-205.

This sequence belongs to the ribonucleoside diphosphate reductase small chain family. R2-like ligand binding oxidase subfamily. Homodimer. Fe cation is required as a cofactor. Mn(2+) serves as cofactor.

In terms of biological role, probable oxidase that might be involved in lipid metabolism. In Mycobacterium tuberculosis (strain ATCC 25177 / H37Ra), this protein is R2-like ligand binding oxidase.